A 387-amino-acid chain; its full sequence is tRNA-specific 2-thiouridylase MnmA (387 aa).

ATP is bound by residues 34-41 (AMSGGVDS) and Met-60. Cys-127 serves as the catalytic Nucleophile. Cys-127 and Cys-223 form a disulfide bridge. Gly-151 lines the ATP pocket. Positions 173-175 (KDQ) are interaction with tRNA. The active-site Cysteine persulfide intermediate is Cys-223.

The protein belongs to the MnmA/TRMU family.

The protein localises to the cytoplasm. The catalysed reaction is S-sulfanyl-L-cysteinyl-[protein] + uridine(34) in tRNA + AH2 + ATP = 2-thiouridine(34) in tRNA + L-cysteinyl-[protein] + A + AMP + diphosphate + H(+). In terms of biological role, catalyzes the 2-thiolation of uridine at the wobble position (U34) of tRNA, leading to the formation of s(2)U34. The sequence is that of tRNA-specific 2-thiouridylase MnmA from Anaplasma marginale (strain St. Maries).